The sequence spans 102 residues: uncharacterized protein (102 aa).

2 helical membrane-spanning segments follow: residues 21-43 (FSSS…TPVF) and 58-80 (SFAV…YFFC).

The protein localises to the membrane. This is an uncharacterized protein from Saccharomyces cerevisiae (strain ATCC 204508 / S288c) (Baker's yeast).